A 298-amino-acid polypeptide reads, in one-letter code: ATP synthase F(1) complex subunit gamma, mitochondrial (298 aa).

Residues M1–M25 constitute a mitochondrion transit peptide. Residue K39 is modified to N6-acetyllysine. Residue K49 is modified to N6-succinyllysine. K55 carries the N6-acetyllysine modification. K115 is subject to N6-acetyllysine; alternate. K115 is modified (N6-succinyllysine; alternate). K138 carries the N6-acetyllysine modification. S146 carries the phosphoserine modification. K154 carries the post-translational modification N6-acetyllysine; alternate. K154 carries the post-translational modification N6-succinyllysine; alternate. K197 bears the N6-acetyllysine mark. K270 carries the N6-succinyllysine modification.

This sequence belongs to the ATPase gamma chain family. Component of the ATP synthase complex composed at least of ATP5F1A/subunit alpha, ATP5F1B/subunit beta, ATP5MC1/subunit c (homooctomer), MT-ATP6/subunit a, MT-ATP8/subunit 8, ATP5ME/subunit e, ATP5MF/subunit f, ATP5MG/subunit g, ATP5MK/subunit k, ATP5MJ/subunit j, ATP5F1C/subunit gamma, ATP5F1D/subunit delta, ATP5F1E/subunit epsilon, ATP5PF/subunit F6, ATP5PB/subunit b, ATP5PD/subunit d, ATP5PO/subunit OSCP. ATP synthase complex consists of a soluble F(1) head domain (subunits alpha(3) and beta(3)) - the catalytic core - and a membrane F(0) domain - the membrane proton channel (subunits c, a, 8, e, f, g, k and j). These two domains are linked by a central stalk (subunits gamma, delta, and epsilon) rotating inside the F1 region and a stationary peripheral stalk (subunits F6, b, d, and OSCP). Interacts with FLVCR2; this interaction occurs in the absence of heme and is disrupted upon heme binding.

The protein resides in the mitochondrion inner membrane. Its function is as follows. Subunit gamma, of the mitochondrial membrane ATP synthase complex (F(1)F(0) ATP synthase or Complex V) that produces ATP from ADP in the presence of a proton gradient across the membrane which is generated by electron transport complexes of the respiratory chain. ATP synthase complex consist of a soluble F(1) head domain - the catalytic core - and a membrane F(1) domain - the membrane proton channel. These two domains are linked by a central stalk rotating inside the F(1) region and a stationary peripheral stalk. During catalysis, ATP synthesis in the catalytic domain of F(1) is coupled via a rotary mechanism of the central stalk subunits to proton translocation. In vivo, can only synthesize ATP although its ATP hydrolase activity can be activated artificially in vitro. With the central stalk subunit delta, is essential for the biogenesis of F(1) catalytic part of the ATP synthase complex namely in the formation of F1 assembly intermediate. In Mus musculus (Mouse), this protein is ATP synthase F(1) complex subunit gamma, mitochondrial.